The chain runs to 1031 residues: Exportin-T (1031 aa).

Belongs to the exportin family.

It is found in the nucleus. It localises to the cytoplasm. Its function is as follows. tRNA nucleus export receptor which facilitates tRNA translocation across the nuclear pore complex. Involved in pre-tRNA splicing, probably by affecting the interaction of pre-tRNA with splicing endonuclease. The chain is Exportin-T (los1) from Emericella nidulans (strain FGSC A4 / ATCC 38163 / CBS 112.46 / NRRL 194 / M139) (Aspergillus nidulans).